A 331-amino-acid chain; its full sequence is 6-phosphogluconolactonase (331 aa).

Lys287 bears the N6-acetyllysine mark.

The protein belongs to the cycloisomerase 2 family.

It catalyses the reaction 6-phospho-D-glucono-1,5-lactone + H2O = 6-phospho-D-gluconate + H(+). The protein operates within carbohydrate degradation; pentose phosphate pathway; D-ribulose 5-phosphate from D-glucose 6-phosphate (oxidative stage): step 2/3. In terms of biological role, catalyzes the hydrolysis of 6-phosphogluconolactone to 6-phosphogluconate. The sequence is that of 6-phosphogluconolactonase from Shigella sonnei (strain Ss046).